The primary structure comprises 324 residues: Glyoxylate/hydroxypyruvate reductase B (324 aa).

Catalysis depends on residues arginine 237 and glutamate 266. The active-site Proton donor is the histidine 285.

Belongs to the D-isomer specific 2-hydroxyacid dehydrogenase family. GhrB subfamily. Homodimer.

The protein localises to the cytoplasm. It catalyses the reaction glycolate + NADP(+) = glyoxylate + NADPH + H(+). The catalysed reaction is (R)-glycerate + NAD(+) = 3-hydroxypyruvate + NADH + H(+). It carries out the reaction (R)-glycerate + NADP(+) = 3-hydroxypyruvate + NADPH + H(+). Its function is as follows. Catalyzes the NADPH-dependent reduction of glyoxylate and hydroxypyruvate into glycolate and glycerate, respectively. This Cronobacter sakazakii (strain ATCC BAA-894) (Enterobacter sakazakii) protein is Glyoxylate/hydroxypyruvate reductase B.